We begin with the raw amino-acid sequence, 524 residues long: REH2-associated factor 1 (524 aa).

Residues 1–22 (MRRWLVASMAPQLHQLLQPVRR) constitute a mitochondrion transit peptide. The C2H2-type 1; atypical zinc-finger motif lies at 48-70 (ASCPACSRVVHMCDMLTHLITAH). Residues 121 to 147 (YMCNWCDRRSDVYATRDKFLKHVADVH) form a C2H2-type 2; atypical zinc finger. A C2H2-type 4 zinc finger spans residues 226-249 (FPCELCNRTFNSEIDLLQHLETRH). The segment at 286–312 (VICDLCVSSSKVYKMPSALFSHIRFKH) adopts a C2H2-type 3; atypical zinc-finger fold. 4 C2H2-type zinc fingers span residues 334-357 (FVCT…NSKH), 376-399 (WWCH…QNKH), 406-429 (HPCP…SLQH), and 443-465 (VKCS…AVKH). The interval 463 to 524 (VKHHKKDPRA…KTTEVSEVTS (62 aa)) is disordered. The segment covering 479 to 500 (APTSASHVAASTSAAVPSEVEA) has biased composition (low complexity).

As to quaternary structure, component of the REH2-associated complex (REH2C) composed of helicase REH2, associated factors H2F1 and H2F2, and mRNAs at various editing stages; the formation of the complex is RNA-independent. Within the complex, interacts with REH2; the interaction is direct. Interacts with various editing complexes including the RNA editing core (RECC) complex, the gRNA-binding (GRBC) complex (also known as the MRB1 complex) and the RNA editing mediator (REMC) complex.

It localises to the mitochondrion. In terms of biological role, plays an important role in mitochondrial mRNA editing by promoting the assembly of the mRNA editosome. Facilitates the recruitment of mRNA to the REH2C complex and promotes the interaction between various editing complexes including REH2C, GRBC, REMC and RECC complexes. This chain is REH2-associated factor 1, found in Trypanosoma brucei brucei (strain 927/4 GUTat10.1).